A 301-amino-acid chain; its full sequence is Glycine--tRNA ligase alpha subunit (301 aa).

Belongs to the class-II aminoacyl-tRNA synthetase family. As to quaternary structure, tetramer of two alpha and two beta subunits.

Its subcellular location is the cytoplasm. The catalysed reaction is tRNA(Gly) + glycine + ATP = glycyl-tRNA(Gly) + AMP + diphosphate. The polypeptide is Glycine--tRNA ligase alpha subunit (Shewanella piezotolerans (strain WP3 / JCM 13877)).